The sequence spans 137 residues: MQATDQSNAVAYRGTGRRKSSIVRVRLVPGSGVMTINGKPGDLYLQFNPSYIANAKAPLESLGLENDYDVLVNARGGGLTGQADAIKLGVARALCELDPENRKPLKLEGYLTRDPRAKERKKYGLRKARKAPQYSKR.

Residues 118–137 (KERKKYGLRKARKAPQYSKR) are disordered.

The protein belongs to the universal ribosomal protein uS9 family.

The sequence is that of Small ribosomal subunit protein uS9 from Acaryochloris marina (strain MBIC 11017).